A 435-amino-acid chain; its full sequence is Chromatin structure-remodeling complex subunit RSC7 (435 aa).

The disordered stretch occupies residues 1–97 (MSDSEGGLAS…DKGVTRSRNR (97 aa)). Residues 30 to 66 (DTEDLDIDENDENEDDDYREEEANEGVNEEEISDEEE) show a composition bias toward acidic residues. The residue at position 86 (S86) is a Phosphoserine. The interval 248-435 (ELRTKGNVIE…QNFEKCNEYI (188 aa)) is functional region; able to complement all NPL6 null allele phenotypes.

Belongs to the RSC7/SWP82 family. RSC7 subfamily. In terms of assembly, interacts with ARP7, ARP9, RSC3, RSC8, RSC30 and STH1. Component of the two forms of the RSC complex composed of at least either RSC1 or RSC2, and ARP7, ARP9, LDB7, NPL6, RSC3, RSC30, RSC4, RSC58, RSC6, RSC8, RSC9, SFH1, STH1, HTL1 and probably RTT102. The complexes interact with histone and histone variant components of centromeric chromatin. Component of a fungal-specific module (HTL1-LDB7-NPL6-RSC3-RSC30) within the RSC complex.

It is found in the nucleus. Functionally, component of the chromatin structure remodeling complex (RSC), which is involved in transcription regulation and nucleosome positioning. RSC is responsible for the transfer of a histone octamer from a nucleosome core particle to naked DNA. The reaction requires ATP and involves an activated RSC-nucleosome intermediate. Remodeling reaction also involves DNA translocation, DNA twist and conformational change. As a reconfigurer of centromeric and flanking nucleosomes, RSC complex is required both for proper kinetochore function in chromosome segregation and, via a PKC1-dependent signaling pathway, for organization of the cellular cytoskeleton. Together with HTL1, LDB7, RSC3, RSC30 components, defines a fungal-specific module within the RSC complex that plays a role in many cellular functions including the maintenance of cell wall integrity. Acidic protein important for nuclear protein localization. This chain is Chromatin structure-remodeling complex subunit RSC7 (NPL6), found in Saccharomyces cerevisiae (strain ATCC 204508 / S288c) (Baker's yeast).